Reading from the N-terminus, the 272-residue chain is HMP-PP phosphatase (272 aa).

The active-site Nucleophile is the D8. Mg(2+)-binding residues include D8, D10, and D212.

Belongs to the HAD-like hydrolase superfamily. Cof family. Mg(2+) serves as cofactor.

It catalyses the reaction 4-amino-2-methyl-5-(diphosphooxymethyl)pyrimidine + H2O = 4-amino-2-methyl-5-(phosphooxymethyl)pyrimidine + phosphate + H(+). Functionally, catalyzes the hydrolysis of 4-amino-2-methyl-5-hydroxymethylpyrimidine pyrophosphate (HMP-PP) to 4-amino-2-methyl-5-hydroxymethylpyrimidine phosphate (HMP-P). In Salmonella arizonae (strain ATCC BAA-731 / CDC346-86 / RSK2980), this protein is HMP-PP phosphatase.